Consider the following 533-residue polypeptide: Light-independent protochlorophyllide reductase subunit B (533 aa).

[4Fe-4S] cluster is bound at residue aspartate 36. The active-site Proton donor is aspartate 292. 428–429 (GL) contacts substrate.

This sequence belongs to the ChlB/BchB/BchZ family. As to quaternary structure, protochlorophyllide reductase is composed of three subunits; BchL, BchN and BchB. Forms a heterotetramer of two BchB and two BchN subunits. [4Fe-4S] cluster serves as cofactor.

The catalysed reaction is chlorophyllide a + oxidized 2[4Fe-4S]-[ferredoxin] + 2 ADP + 2 phosphate = protochlorophyllide a + reduced 2[4Fe-4S]-[ferredoxin] + 2 ATP + 2 H2O. It functions in the pathway porphyrin-containing compound metabolism; bacteriochlorophyll biosynthesis (light-independent). In terms of biological role, component of the dark-operative protochlorophyllide reductase (DPOR) that uses Mg-ATP and reduced ferredoxin to reduce ring D of protochlorophyllide (Pchlide) to form chlorophyllide a (Chlide). This reaction is light-independent. The NB-protein (BchN-BchB) is the catalytic component of the complex. The protein is Light-independent protochlorophyllide reductase subunit B of Prosthecochloris aestuarii (strain DSM 271 / SK 413).